A 155-amino-acid chain; its full sequence is Probable Brix domain-containing ribosomal biogenesis protein (155 aa).

A Brix domain is found at 1–155 (MLITSSRKPS…KNYRKMVMSE (155 aa)).

Probably involved in the biogenesis of the ribosome. The polypeptide is Probable Brix domain-containing ribosomal biogenesis protein (Methanococcoides burtonii (strain DSM 6242 / NBRC 107633 / OCM 468 / ACE-M)).